We begin with the raw amino-acid sequence, 198 residues long: Holliday junction branch migration complex subunit RuvA (198 aa).

Residues M1 to H63 are domain I. Residues S64–P142 are domain II. Residues P143–Q147 form a flexible linker region. The interval Q148–G198 is domain III.

Belongs to the RuvA family. In terms of assembly, homotetramer. Forms an RuvA(8)-RuvB(12)-Holliday junction (HJ) complex. HJ DNA is sandwiched between 2 RuvA tetramers; dsDNA enters through RuvA and exits via RuvB. An RuvB hexamer assembles on each DNA strand where it exits the tetramer. Each RuvB hexamer is contacted by two RuvA subunits (via domain III) on 2 adjacent RuvB subunits; this complex drives branch migration. In the full resolvosome a probable DNA-RuvA(4)-RuvB(12)-RuvC(2) complex forms which resolves the HJ.

It is found in the cytoplasm. In terms of biological role, the RuvA-RuvB-RuvC complex processes Holliday junction (HJ) DNA during genetic recombination and DNA repair, while the RuvA-RuvB complex plays an important role in the rescue of blocked DNA replication forks via replication fork reversal (RFR). RuvA specifically binds to HJ cruciform DNA, conferring on it an open structure. The RuvB hexamer acts as an ATP-dependent pump, pulling dsDNA into and through the RuvAB complex. HJ branch migration allows RuvC to scan DNA until it finds its consensus sequence, where it cleaves and resolves the cruciform DNA. The sequence is that of Holliday junction branch migration complex subunit RuvA from Streptococcus equi subsp. zooepidemicus (strain H70).